Here is a 334-residue protein sequence, read N- to C-terminus: Fructose-1,6-bisphosphatase class 1 (334 aa).

4 residues coordinate Mg(2+): E89, D112, L114, and D115. Residues 115 to 118, N208, Y241, and K271 contribute to the substrate site; that span reads DGSS. E277 contributes to the Mg(2+) binding site.

It belongs to the FBPase class 1 family. Homotetramer. Mg(2+) is required as a cofactor.

It is found in the cytoplasm. The catalysed reaction is beta-D-fructose 1,6-bisphosphate + H2O = beta-D-fructose 6-phosphate + phosphate. The protein operates within carbohydrate biosynthesis; gluconeogenesis. This is Fructose-1,6-bisphosphatase class 1 from Serratia proteamaculans (strain 568).